The sequence spans 619 residues: Mitogen-activated protein kinase kinase kinase 2 (619 aa).

The disordered stretch occupies residues 25 to 45 (LSLQETRKAKSSSPKKQNDVR). Serine 26 carries the phosphoserine modification. A PB1 domain is found at 43–122 (DVRVKFEHRG…KSLKILLVIN (80 aa)). Serine 153, serine 159, and serine 164 each carry phosphoserine. Disordered regions lie at residues 154–173 (IIGP…IPDE), 201–248 (LDPL…QEFS), and 289–355 (RTQG…APTN). Low complexity predominate over residues 203–219 (PLSLSSPENSGSGSCPS). Phosphoserine occurs at positions 239, 297, 311, 331, 344, and 349. Residues 290-299 (TQGTSLRSPV) are compositionally biased toward polar residues. Low complexity predominate over residues 300–315 (SFSPTDHSLSTSSGSS). The span at 322–332 (DDSRIRRRGSD) shows a compositional bias: basic and acidic residues. The 261-residue stretch at 357–617 (RLGKLLGQGA…DELLRHMFVH (261 aa)) folds into the Protein kinase domain. ATP is bound by residues 362–371 (LGQGAFGRVY) and lysine 385. Aspartate 483 functions as the Proton acceptor in the catalytic mechanism.

The protein belongs to the protein kinase superfamily. STE Ser/Thr protein kinase family. MAP kinase kinase kinase subfamily. Interacts with PKN2; the interaction activates PKN2 kinase activity in a MAP3K2-independent kinase activity. Self-associates. Binds both upstream activators and downstream substrates in multimolecular complexes. Interacts (via the kinase catalytic domain) with STK38. Interacts with XIAP/BIRC4. Mg(2+) serves as cofactor. Post-translationally, autophosphorylated. Ubiquitination by XIAP/BIRC4 does not lead to proteasomal degradation.

Its subcellular location is the cytoplasm. The protein localises to the nucleus. The enzyme catalyses L-seryl-[protein] + ATP = O-phospho-L-seryl-[protein] + ADP + H(+). It carries out the reaction L-threonyl-[protein] + ATP = O-phospho-L-threonyl-[protein] + ADP + H(+). Activated by phosphorylation on Thr-524. Component of a protein kinase signal transduction cascade. Regulates the JNK and ERK5 pathways by phosphorylating and activating MAP2K5 and MAP2K7. Plays a role in caveolae kiss-and-run dynamics. This Homo sapiens (Human) protein is Mitogen-activated protein kinase kinase kinase 2 (MAP3K2).